A 275-amino-acid polypeptide reads, in one-letter code: Large ribosomal subunit protein uL2 (275 aa).

Disordered stretches follow at residues 34–59 (LEKK…GGHK) and 223–275 (VAMN…RNKK).

The protein belongs to the universal ribosomal protein uL2 family. In terms of assembly, part of the 50S ribosomal subunit. Forms a bridge to the 30S subunit in the 70S ribosome.

Its function is as follows. One of the primary rRNA binding proteins. Required for association of the 30S and 50S subunits to form the 70S ribosome, for tRNA binding and peptide bond formation. It has been suggested to have peptidyltransferase activity; this is somewhat controversial. Makes several contacts with the 16S rRNA in the 70S ribosome. The polypeptide is Large ribosomal subunit protein uL2 (Teredinibacter turnerae (strain ATCC 39867 / T7901)).